A 304-amino-acid polypeptide reads, in one-letter code: Xylanase inhibitor protein 1 (304 aa).

Residues 1 to 30 (MAPLAARRPACLLALLSVAAALFLTPTALA) form the signal peptide. The region spanning 36-304 (GQVTVFWGRN…NYSSLIKYYA (269 aa)) is the GH18 domain. The cysteines at positions 55 and 96 are disulfide-linked. The N-linked (GlcNAc...) asparagine glycan is linked to asparagine 119. Catalysis depends on glutamate 158, which acts as the Proton donor. An interaction with fungal GH11 xylanase region spans residues 178–184 (IRGGPGK). Cysteine 194 and cysteine 225 are oxidised to a cystine. Residues 262–275 (HPKNVYYGVAPVAQ) form an interaction with fungal GH10 xylanase region. Asparagine 295 carries N-linked (GlcNAc...) asparagine glycosylation.

Belongs to the glycosyl hydrolase 18 family. Xylanase inhibitor subfamily. As to quaternary structure, binds to fungal GH10 and GH11 xylanases. Also forms a ternary complex with barley alpha-amylase 1 (AMY1) and insoluble starch.

Its subcellular location is the secreted. Its function is as follows. Fungal xylanase inhibitor. Possesses competitive inhibiting activity against fungal endo-1,4-beta-D-xylanases belonging to glycoside hydrolase family 10 (GH10) and family 11 (GH11). Possesses also inhibitory activity towards barley alpha-amylases. Binding to xylanases or amylases is necessary for inhibition activity. May function in plant defense against secreted fungal pathogen xylanases. Is similar to class III chitinases, but does not exhibit chitinase activity. This chain is Xylanase inhibitor protein 1, found in Triticum aestivum (Wheat).